We begin with the raw amino-acid sequence, 160 residues long: Ureidoglycolate lyase (160 aa).

This sequence belongs to the ureidoglycolate lyase family. In terms of assembly, homodimer. Ni(2+) is required as a cofactor.

It catalyses the reaction (S)-ureidoglycolate = urea + glyoxylate. Its pathway is nitrogen metabolism; (S)-allantoin degradation. Catalyzes the catabolism of the allantoin degradation intermediate (S)-ureidoglycolate, generating urea and glyoxylate. Involved in the utilization of allantoin as nitrogen source. The sequence is that of Ureidoglycolate lyase from Salmonella typhimurium (strain LT2 / SGSC1412 / ATCC 700720).